The following is a 240-amino-acid chain: 1-(5-phosphoribosyl)-5-[(5-phosphoribosylamino)methylideneamino] imidazole-4-carboxamide isomerase (240 aa).

The active-site Proton acceptor is the aspartate 8. Aspartate 129 acts as the Proton donor in catalysis.

It belongs to the HisA/HisF family.

It localises to the cytoplasm. It catalyses the reaction 1-(5-phospho-beta-D-ribosyl)-5-[(5-phospho-beta-D-ribosylamino)methylideneamino]imidazole-4-carboxamide = 5-[(5-phospho-1-deoxy-D-ribulos-1-ylimino)methylamino]-1-(5-phospho-beta-D-ribosyl)imidazole-4-carboxamide. Its pathway is amino-acid biosynthesis; L-histidine biosynthesis; L-histidine from 5-phospho-alpha-D-ribose 1-diphosphate: step 4/9. The sequence is that of 1-(5-phosphoribosyl)-5-[(5-phosphoribosylamino)methylideneamino] imidazole-4-carboxamide isomerase from Listeria monocytogenes serotype 4b (strain CLIP80459).